The primary structure comprises 440 residues: Ferredoxin--NADP reductase (440 aa).

Residues 17-75 (SRVFVYEVVGMRQNEETDQTNYPIRKSGSVFIRVPYNRMNQEMQRITRLGGKIVSIQTV) form the CpcD-like domain. Positions 93–142 (ASSETAKSEGNGKATPVKTDSGAKGFAKPPAEEQLKKKDNKGNTMTQAKA) are disordered. A compositionally biased stretch (basic and acidic residues) spans 122 to 133 (PAEEQLKKKDNK). The region spanning 155-279 (NAPFIGKVIS…TGPVGKEMLL (125 aa)) is the FAD-binding FR-type domain. Residues 214-217 (RLYS), 235-237 (CVR), Tyr-241, 253-255 (VCS), and Thr-294 contribute to the FAD site. Positions 217 and 237 each coordinate NADP(+). NADP(+)-binding positions include Thr-294, 330 to 331 (VP), 360 to 361 (SR), 370 to 374 (RMYIQ), 399 to 400 (GL), and Glu-438.

Belongs to the ferredoxin--NADP reductase type 1 family. It depends on FAD as a cofactor.

It localises to the cellular thylakoid membrane. It carries out the reaction 2 reduced [2Fe-2S]-[ferredoxin] + NADP(+) + H(+) = 2 oxidized [2Fe-2S]-[ferredoxin] + NADPH. In Trichormus variabilis (strain ATCC 29413 / PCC 7937) (Anabaena variabilis), this protein is Ferredoxin--NADP reductase (petH).